A 369-amino-acid polypeptide reads, in one-letter code: Probable serine/threonine-protein kinase FMP48 (369 aa).

The Protein kinase domain maps to 2-369; the sequence is YTKLRSIQSG…EKPCLIQDGK (368 aa). ATP is bound by residues 8 to 16 and Lys31; that span reads IQSGTFSTV. Asp133 functions as the Proton acceptor in the catalytic mechanism.

This sequence belongs to the protein kinase superfamily. Ser/Thr protein kinase family.

It localises to the mitochondrion. The enzyme catalyses L-seryl-[protein] + ATP = O-phospho-L-seryl-[protein] + ADP + H(+). It catalyses the reaction L-threonyl-[protein] + ATP = O-phospho-L-threonyl-[protein] + ADP + H(+). The protein is Probable serine/threonine-protein kinase FMP48 (FMP48) of Saccharomyces cerevisiae (strain ATCC 204508 / S288c) (Baker's yeast).